The following is a 676-amino-acid chain: ATP-dependent zinc metalloprotease FTSH 2, chloroplastic (676 aa).

The N-terminal 32 residues, 1–32, are a transit peptide targeting the chloroplast; that stretch reads MAPTSMSLAAKTPLPFSTLPSSGVAQRPVSVT. A helical transmembrane segment spans residues 155-175; that stretch reads LLFNLIGNLAFPLILIGGLFL. 254–261 is a binding site for ATP; that stretch reads GPPGTGKT. H475 is a Zn(2+) binding site. E476 is an active-site residue. Positions 479 and 553 each coordinate Zn(2+).

This sequence in the N-terminal section; belongs to the AAA ATPase family. The protein in the C-terminal section; belongs to the peptidase M41 family. Zn(2+) is required as a cofactor.

Its subcellular location is the plastid. The protein localises to the chloroplast thylakoid membrane. Functionally, probable ATP-dependent zinc metallopeptidase. The chain is ATP-dependent zinc metalloprotease FTSH 2, chloroplastic (FTSH2) from Oryza sativa subsp. japonica (Rice).